Here is a 1067-residue protein sequence, read N- to C-terminus: Ubiquitin conjugation factor E4 A (1067 aa).

A disordered region spans residues 33 to 57; that stretch reads KEQLKQQSDELPASPDDSDNSVSES. At lysine 386 the chain carries N6-acetyllysine. The region spanning 987–1061 is the U-box domain; the sequence is DACDEFLDPI…QRWLAERKQQ (75 aa).

Belongs to the ubiquitin conjugation factor E4 family.

The protein localises to the cytoplasm. The enzyme catalyses S-ubiquitinyl-[E2 ubiquitin-conjugating enzyme]-L-cysteine + [acceptor protein]-L-lysine = [E2 ubiquitin-conjugating enzyme]-L-cysteine + N(6)-ubiquitinyl-[acceptor protein]-L-lysine.. It participates in protein modification; protein ubiquitination. Functionally, ubiquitin-protein ligase that probably functions as an E3 ligase in conjunction with specific E1 and E2 ligases. May also function as an E4 ligase mediating the assembly of polyubiquitin chains on substrates ubiquitinated by another E3 ubiquitin ligase. Mediates 'Lys-48'-linked polyubiquitination of substrates. This Bos taurus (Bovine) protein is Ubiquitin conjugation factor E4 A.